A 421-amino-acid polypeptide reads, in one-letter code: Early growth response protein 2 (421 aa).

Over residues Cys-127–Ser-145 the composition is skewed to low complexity. Disordered regions lie at residues Cys-127–Asp-152, Ser-179–Gly-200, and Ser-223–Tyr-288. Polar residues predominate over residues Pro-236 to Gly-247. 3 C2H2-type zinc fingers span residues Tyr-288–His-312, Phe-318–His-340, and Phe-346–His-368.

The protein belongs to the EGR C2H2-type zinc-finger protein family.

Its subcellular location is the nucleus. Functionally, sequence-specific DNA-binding transcription factor. In Xenopus laevis (African clawed frog), this protein is Early growth response protein 2 (egr2).